The sequence spans 783 residues: Endonuclease MutS2 (783 aa).

328-335 (GPNTGGKT) lines the ATP pocket. Residues 708-783 (LDLRGKRYEE…GSGCTIATLG (76 aa)) enclose the Smr domain.

Belongs to the DNA mismatch repair MutS family. MutS2 subfamily. As to quaternary structure, homodimer. Binds to stalled ribosomes, contacting rRNA.

In terms of biological role, endonuclease that is involved in the suppression of homologous recombination and thus may have a key role in the control of bacterial genetic diversity. Functionally, acts as a ribosome collision sensor, splitting the ribosome into its 2 subunits. Detects stalled/collided 70S ribosomes which it binds and splits by an ATP-hydrolysis driven conformational change. Acts upstream of the ribosome quality control system (RQC), a ribosome-associated complex that mediates the extraction of incompletely synthesized nascent chains from stalled ribosomes and their subsequent degradation. Probably generates substrates for RQC. This is Endonuclease MutS2 from Streptococcus thermophilus (strain ATCC BAA-491 / LMD-9).